We begin with the raw amino-acid sequence, 335 residues long: Nucleoid-associated protein YejK (335 aa).

Belongs to the YejK family.

The protein localises to the cytoplasm. It is found in the nucleoid. This chain is Nucleoid-associated protein YejK, found in Salmonella schwarzengrund (strain CVM19633).